The chain runs to 422 residues: 4-hydroxy-3-methylbut-2-en-1-yl diphosphate synthase (flavodoxin) (422 aa).

[4Fe-4S] cluster is bound by residues Cys316, Cys319, Cys362, and Glu369.

This sequence belongs to the IspG family. [4Fe-4S] cluster serves as cofactor.

The enzyme catalyses (2E)-4-hydroxy-3-methylbut-2-enyl diphosphate + oxidized [flavodoxin] + H2O + 2 H(+) = 2-C-methyl-D-erythritol 2,4-cyclic diphosphate + reduced [flavodoxin]. It functions in the pathway isoprenoid biosynthesis; isopentenyl diphosphate biosynthesis via DXP pathway; isopentenyl diphosphate from 1-deoxy-D-xylulose 5-phosphate: step 5/6. Converts 2C-methyl-D-erythritol 2,4-cyclodiphosphate (ME-2,4cPP) into 1-hydroxy-2-methyl-2-(E)-butenyl 4-diphosphate. This chain is 4-hydroxy-3-methylbut-2-en-1-yl diphosphate synthase (flavodoxin), found in Ehrlichia ruminantium (strain Welgevonden).